The following is a 75-amino-acid chain: Protein P8 (75 aa).

The disordered stretch occupies residues 19 to 47 (PMGGMPSIASSSSAETGQQTQSGNFTGGG). A compositionally biased stretch (polar residues) spans 26-39 (IASSSSAETGQQTQ). Residues 55 to 72 (NNQLLIVGAVVIGLFLVI) form a helical membrane-spanning segment.

It localises to the virion membrane. This Pseudoalteromonas phage PM2 (Bacteriophage PM2) protein is Protein P8 (VIII).